Consider the following 178-residue polypeptide: MDKKTQAVTEIYAKSLVEVALERDSVPIIYDEVRAILSVLDDQQVQDFLASKAIDLSAKSEVVRLFQESCSNYMKQFLEIILQNERQQLLYLIMKEVLKELSLKTHIFDIEVTTAVALSDDQKERLTALVEKKFALTKRNLIEKIDDEIIGGFIIKANNKVIDTSIRSQLQELKMNLK.

Belongs to the ATPase delta chain family. As to quaternary structure, F-type ATPases have 2 components, F(1) - the catalytic core - and F(0) - the membrane proton channel. F(1) has five subunits: alpha(3), beta(3), gamma(1), delta(1), epsilon(1). F(0) has three main subunits: a(1), b(2) and c(10-14). The alpha and beta chains form an alternating ring which encloses part of the gamma chain. F(1) is attached to F(0) by a central stalk formed by the gamma and epsilon chains, while a peripheral stalk is formed by the delta and b chains.

Its subcellular location is the cell membrane. In terms of biological role, f(1)F(0) ATP synthase produces ATP from ADP in the presence of a proton or sodium gradient. F-type ATPases consist of two structural domains, F(1) containing the extramembraneous catalytic core and F(0) containing the membrane proton channel, linked together by a central stalk and a peripheral stalk. During catalysis, ATP synthesis in the catalytic domain of F(1) is coupled via a rotary mechanism of the central stalk subunits to proton translocation. This protein is part of the stalk that links CF(0) to CF(1). It either transmits conformational changes from CF(0) to CF(1) or is implicated in proton conduction. This Streptococcus mutans serotype c (strain ATCC 700610 / UA159) protein is ATP synthase subunit delta.